Consider the following 382-residue polypeptide: Apolipoprotein A-IV (382 aa).

The signal sequence occupies residues 1–20; it reads MFLRAVVLTLALVAVTGARA. Repeat copies occupy residues 33–54, 60–81, 82–103, 115–136, 137–158, 159–180, 181–202, 203–224, 225–246, 247–268, 269–286, 287–308, and 309–330. A 13 X 22 AA approximate tandem repeats region spans residues 33–330; it reads DYFSQLSNNA…QVEELRQKLG (298 aa). A disordered region spans residues 362-382; the sequence is ENQDMPLALPEQEQAPGPLES.

The protein belongs to the apolipoprotein A1/A4/E family. Homodimer.

It localises to the secreted. In terms of biological role, may have a role in chylomicrons and VLDL secretion and catabolism. Required for efficient activation of lipoprotein lipase by ApoC-II; potent activator of LCAT. Apoa-IV is a major component of HDL and chylomicrons. In Acinonyx jubatus (Cheetah), this protein is Apolipoprotein A-IV (APOA4).